A 284-amino-acid polypeptide reads, in one-letter code: tRNA N(3)-cytidine methyltransferase METTL6 (284 aa).

Positions 45 and 49 each coordinate S-adenosyl-L-methionine. 8 residues coordinate S-adenosyl-L-homocysteine: Y49, H61, E85, G87, D110, D136, L137, and I157. 5 residues coordinate S-adenosyl-L-methionine: G87, D110, D136, L137, and I157.

This sequence belongs to the methyltransferase superfamily. METL family. In terms of assembly, monomer. Interacts with SARS1/SerRS; interaction is mediated via tRNA(Ser) and is required for N(3)-methylcytidine methylation.

It is found in the cytoplasm. The protein localises to the nucleus. The enzyme catalyses cytidine(32) in tRNA(Ser) + S-adenosyl-L-methionine = N(3)-methylcytidine(32) in tRNA(Ser) + S-adenosyl-L-homocysteine + H(+). Functionally, S-adenosyl-L-methionine-dependent methyltransferase that mediates N(3)-methylcytidine modification of residue 32 of the tRNA anticodon loop of tRNA(Ser), including tRNA(Ser)(UGA) and tRNA(Ser)(GCU). Interaction with SARS1/SerRS is required for N(3)-methylcytidine methylation. This chain is tRNA N(3)-cytidine methyltransferase METTL6, found in Homo sapiens (Human).